A 100-amino-acid chain; its full sequence is Small ribosomal subunit protein uS14c (100 aa).

Belongs to the universal ribosomal protein uS14 family. In terms of assembly, part of the 30S ribosomal subunit.

Its subcellular location is the plastid. The protein resides in the chloroplast. Functionally, binds 16S rRNA, required for the assembly of 30S particles. The protein is Small ribosomal subunit protein uS14c of Cycas taitungensis (Prince sago).